The primary structure comprises 494 residues: Tripartite motif-containing protein 5 (494 aa).

Position 2 is an N-acetylalanine (A2). The RING-type zinc finger occupies 15 to 59 (CPICLELLTEPLSLDCGHSFCQACITANHKESMLHQGERSCPLCR). Residues 91-132 (QNVDHCARHGEKLLLFCEQDGNIICWLCERSQEHRGHNTFLV) form a B box-type zinc finger. Residues C96, H99, C118, and H124 each contribute to the Zn(2+) site. Positions 132-223 (VEEVAQKYRE…RLVQSENDMV (92 aa)) form a coiled coil. The segment at 186-199 (FKQLRDILDCEESN) is required for interaction with GABARAP and for autophagy. A B30.2/SPRY domain is found at 280-494 (PDLKRMLQVL…LPMTLCSPSS (215 aa)).

It belongs to the TRIM/RBCC family. In terms of assembly, can form homodimers and homotrimers. In addition to lower-order dimerization, also exhibits a higher-order multimerization and both low- and high-order multimerizations are essential for its restriction activity. Interacts with BTBD1 and BTBD2. Interacts with PSMC4, PSMC5, PSMD7 and HSPA8/HSC70. Interacts (via B30.2/SPRY domain) with HSPA1A/B. Interacts with PSMC2, MAP3K7/TAK1, TAB2 and TAB3. Interacts with SQSTM1. Interacts with TRIM6 and TRIM34. Interacts with ULK1 (phosphorylated form), GABARAP, GABARAPL1, GABARAPL2, MAP1LC3A, MAP1LC3C and BECN1. Degraded in a proteasome-independent fashion in the absence of viral infection but in a proteasome-dependent fashion following exposure to restriction sensitive virus. In terms of processing, autoubiquitinated in a RING finger- and UBE2D2-dependent manner. Monoubiquitinated by TRIM21. Deubiquitinated by Yersinia YopJ. Ubiquitination may not lead to proteasomal degradation.

It is found in the cytoplasm. It localises to the nucleus. The enzyme catalyses S-ubiquitinyl-[E2 ubiquitin-conjugating enzyme]-L-cysteine + [acceptor protein]-L-lysine = [E2 ubiquitin-conjugating enzyme]-L-cysteine + N(6)-ubiquitinyl-[acceptor protein]-L-lysine.. Its pathway is protein modification; protein ubiquitination. Capsid-specific restriction factor that prevents infection from non-host-adapted retroviruses. Blocks viral replication early in the life cycle, after viral entry but before reverse transcription. In addition to acting as a capsid-specific restriction factor, also acts as a pattern recognition receptor that activates innate immune signaling in response to the retroviral capsid lattice. Binding to the viral capsid triggers its E3 ubiquitin ligase activity, and in concert with the heterodimeric ubiquitin conjugating enzyme complex UBE2V1-UBE2N (also known as UBC13-UEV1A complex) generates 'Lys-63'-linked polyubiquitin chains, which in turn are catalysts in the autophosphorylation of the MAP3K7/TAK1 complex (includes TAK1, TAB2, and TAB3). Activation of the MAP3K7/TAK1 complex by autophosphorylation results in the induction and expression of NF-kappa-B and MAPK-responsive inflammatory genes, thereby leading to an innate immune response in the infected cell. Plays a role in regulating autophagy through activation of autophagy regulator BECN1 by causing its dissociation from its inhibitors BCL2 and TAB2. This chain is Tripartite motif-containing protein 5 (TRIM5), found in Saimiri boliviensis boliviensis (Bolivian squirrel monkey).